The primary structure comprises 484 residues: Regulator of G-protein signaling 9 (484 aa).

Positions 30 to 105 constitute a DEP domain; it reads PDTGVRVQNQ…PDSSLYRFQT (76 aa). Residues 219-280 form the G protein gamma domain; that stretch reads VVSVRKEIMY…ITDDTQFWDL (62 aa). The 116-residue stretch at 299-414 folds into the RGS domain; it reads NFSELIRDPK…LKSPIYKEML (116 aa). A disordered region spans residues 460–484; it reads TTVDITQVMSKLDRRSQLRKEPPPK. The span at 470–484 shows a compositional bias: basic and acidic residues; sequence KLDRRSQLRKEPPPK.

Heterodimer with GNB5. Interacts with RGS7BP, leading to regulate the subcellular location of the heterodimer formed with GNB5. Component of the RGS9-1-Gbeta5 complex composed of RGS9 (RGS9-1), Gbeta5 (GNB5) and RGS9BP. Interacts with PDE6G and GNAT1. In terms of processing, phosphorylation is decreased by light exposition. As to expression, photoreceptor outer segments.

The protein resides in the membrane. Its function is as follows. Inhibits signal transduction by increasing the GTPase activity of G protein alpha subunits thereby driving them into their inactive GDP-bound form. Binds to GNAT1. Involved in phototransduction; key element in the recovery phase of visual transduction. This chain is Regulator of G-protein signaling 9 (RGS9), found in Bos taurus (Bovine).